The sequence spans 208 residues: UPF0637 protein BCAH820_3975 (208 aa).

The protein belongs to the UPF0637 family.

The sequence is that of UPF0637 protein BCAH820_3975 from Bacillus cereus (strain AH820).